We begin with the raw amino-acid sequence, 345 residues long: Arginine N-succinyltransferase (345 aa).

Leucine 125 serves as a coordination point for succinyl-CoA. The Proton donor role is filled by histidine 229.

The protein belongs to the arginine N-succinyltransferase family.

The catalysed reaction is succinyl-CoA + L-arginine = N(2)-succinyl-L-arginine + CoA + H(+). The protein operates within amino-acid degradation; L-arginine degradation via AST pathway; L-glutamate and succinate from L-arginine: step 1/5. Functionally, catalyzes the transfer of succinyl-CoA to arginine to produce N(2)-succinylarginine. The protein is Arginine N-succinyltransferase of Yersinia enterocolitica serotype O:8 / biotype 1B (strain NCTC 13174 / 8081).